Reading from the N-terminus, the 550-residue chain is Zorya protein ZorA (550 aa).

3 helical membrane passes run 16–36, 52–72, and 92–112; these read TLITNIFIWAVIFVFLSAWWC, LMGALGILGTFIGIIIGLLNF, and FITSIVGMFFAILFNGMDAFF.

This sequence belongs to the MotA family.

It localises to the cell inner membrane. Its function is as follows. Component of antiviral defense system Zorya type II, composed of ZorA, ZorB and ZorE. Expression of Zorya type II in E.coli (strain MG1655) confers resistance to phages SECphi7 and T7. While most T7 infected Zorya-containing cells undergo abortive infection, a minority produce viable phage progeny. These eventually accumulate to a high multiplicity of infection, leading to culture collapse by 170 minutes after initial infection. ZorA and ZorB probably assemble in the cell inner membrane and exert their effect there. The chain is Zorya protein ZorA from Escherichia coli (strain ATCC 8739 / DSM 1576 / NBRC 3972 / NCIMB 8545 / WDCM 00012 / Crooks).